A 435-amino-acid polypeptide reads, in one-letter code: 3-phosphoshikimate 1-carboxyvinyltransferase (435 aa).

Residues Lys-23, Ser-24, and Arg-28 each contribute to the 3-phosphoshikimate site. A phosphoenolpyruvate-binding site is contributed by Lys-23. Phosphoenolpyruvate is bound by residues Gly-96 and Arg-124. 3-phosphoshikimate is bound by residues Ser-167, Ser-168, Gln-169, Ser-196, Glu-311, and His-340. Gln-169 serves as a coordination point for phosphoenolpyruvate. Catalysis depends on Glu-311, which acts as the Proton acceptor. Positions 344, 385, and 410 each coordinate phosphoenolpyruvate.

Belongs to the EPSP synthase family. Monomer.

It localises to the cytoplasm. It carries out the reaction 3-phosphoshikimate + phosphoenolpyruvate = 5-O-(1-carboxyvinyl)-3-phosphoshikimate + phosphate. It functions in the pathway metabolic intermediate biosynthesis; chorismate biosynthesis; chorismate from D-erythrose 4-phosphate and phosphoenolpyruvate: step 6/7. Its function is as follows. Catalyzes the transfer of the enolpyruvyl moiety of phosphoenolpyruvate (PEP) to the 5-hydroxyl of shikimate-3-phosphate (S3P) to produce enolpyruvyl shikimate-3-phosphate and inorganic phosphate. The protein is 3-phosphoshikimate 1-carboxyvinyltransferase of Mycolicibacterium paratuberculosis (strain ATCC BAA-968 / K-10) (Mycobacterium paratuberculosis).